The sequence spans 98 residues: Ferredoxin-3 (98 aa).

4Fe-4S ferredoxin-type domains are found at residues 18–47 (FVEA…LQAL) and 66–95 (VMSI…HSPL). [4Fe-4S] cluster is bound by residues Cys-27, Cys-30, Cys-33, Cys-37, Cys-75, Cys-78, Cys-81, and Cys-85.

In terms of assembly, homodimer. It depends on [4Fe-4S] cluster as a cofactor.

In terms of biological role, ferredoxins are iron-sulfur proteins that transfer electrons in a wide variety of metabolic reactions. This chain is Ferredoxin-3 (fdxB), found in Trichormus variabilis (strain ATCC 29413 / PCC 7937) (Anabaena variabilis).